The following is a 358-amino-acid chain: MRHAREVTFARLMRTFAAVSDTQTVASKHKTAPKAADIANRLRKEKEKEKDDKNEVPVSPLQSRVNELKQFSQQLQSVHPSVFAKALYRSSLYEDQNIIAINKPYDVPLHNINGIRNSIAECLPLLAKITDNMRPGSQLHLCHKLEKETTGVLILAKTEEAAEHVQTLIQSHKVEMKYLAITVGVPVPSEGVIDIPVIERAVVGPQPHFKMALSPLFKVNEDGDGVTRVRAHRQAHAAVTRYQVLDNTSGCSLVELQPLTGVKNQLRVHMALALTCPILGDHKYSHWSKLAPQKLPEGTLRRLGLVQSKTRYLPLHLHSRRIVLPGFKGHRDITVSCPLPKYFINALKRLEIPLPAKE.

The transit peptide at 1–12 (MRHAREVTFARL) directs the protein to the mitochondrion.

The protein belongs to the pseudouridine synthase RluA family.

The protein resides in the mitochondrion matrix. It localises to the nucleus. The protein localises to the cytoplasm. It catalyses the reaction uridine in 5S rRNA = pseudouridine in 5S rRNA. The enzyme catalyses a uridine in tRNA = a pseudouridine in tRNA. The catalysed reaction is a uridine in mRNA = a pseudouridine in mRNA. In terms of biological role, catalyzes uridine to pseudouridine isomerization (pseudouridylation) of different mitochondrial RNA substrates. Acts on position 1397 in 16S mitochondrial ribosomal RNA (16S mt-rRNA). This modification is required for the assembly of 16S mt-rRNA into a functional mitochondrial ribosome. Acts on position 39 in mitochondrial tRNA(Phe). Also catalyzes pseudouridylation of mRNAs in nucleus: acts as a regulator of pre-mRNA splicing by mediating pseudouridylation of pre-mRNAs at locations associated with alternatively spliced regions. Pseudouridylation of pre-mRNAs near splice sites directly regulates mRNA splicing and mRNA 3'-end processing. The sequence is that of Pseudouridylate synthase RPUSD4, mitochondrial from Danio rerio (Zebrafish).